A 380-amino-acid chain; its full sequence is Ceramide-binding protein svf1 (380 aa).

The segment at Met1–Pro18 is peripherally associates with membranes.

This sequence belongs to the SVF1 family.

The protein resides in the golgi apparatus. It localises to the cis-Golgi network membrane. Its subcellular location is the endoplasmic reticulum membrane. It is found in the cytoplasm. The protein localises to the nucleus. Ceramide-binding protein that may transfer ceramides from the endoplasmic reticulum membrane to the cis-Golgi network membrane, and is thereby required for the biosynthesis of complex sphingolipids. This is Ceramide-binding protein svf1 from Schizosaccharomyces pombe (strain 972 / ATCC 24843) (Fission yeast).